We begin with the raw amino-acid sequence, 187 residues long: Capsid protein (187 aa).

The span at 151–180 (RRGSARVVRSPRRRTPSPRRRRSQSPRRRP) shows a compositional bias: basic residues. The disordered stretch occupies residues 151–187 (RRGSARVVRSPRRRTPSPRRRRSQSPRRRPQSPASNC). Phosphoserine; by host is present on residues serine 160, serine 167, and serine 175. A run of 3 repeats spans residues 160–164 (SPRRR), 167–171 (SPRRR), and 175–179 (SPRRR). Positions 160–179 (SPRRRTPSPRRRRSQSPRRR) are 3 X 5 AA repeats of S-P-R-R-R. The short motif at 163 to 180 (RRTPSPRRRRSQSPRRRP) is the Bipartite nuclear localization signal element. The RNA binding stretch occupies residues 181-187 (QSPASNC).

This sequence belongs to the orthohepadnavirus core antigen family. In terms of assembly, homodimerizes, then multimerizes. Interacts with cytosol exposed regions of viral L glycoprotein present in the reticulum-to-Golgi compartment. Interacts with human FLNB. Phosphorylated form interacts with host importin alpha; this interaction depends on the exposure of the NLS, which itself depends upon genome maturation and/or phosphorylation of the capsid protein. Interacts with host NUP153. In terms of processing, phosphorylated by host SRPK1, SRPK2, and maybe protein kinase C or GAPDH. Phosphorylation is critical for pregenomic RNA packaging. Protein kinase C phosphorylation is stimulated by HBx protein and may play a role in transport of the viral genome to the nucleus at the late step during the viral replication cycle.

It localises to the virion. Its subcellular location is the host cytoplasm. Self assembles to form an icosahedral capsid. Most capsids appear to be large particles with an icosahedral symmetry of T=4 and consist of 240 copies of capsid protein, though a fraction forms smaller T=3 particles consisting of 180 capsid proteins. Entering capsids are transported along microtubules to the nucleus. Phosphorylation of the capsid is thought to induce exposure of nuclear localization signal in the C-terminal portion of the capsid protein that allows binding to the nuclear pore complex via the importin (karyopherin-) alpha and beta. Capsids are imported in intact form through the nuclear pore into the nuclear basket, where it probably binds NUP153. Only capsids that contain the mature viral genome can release the viral DNA and capsid protein into the nucleoplasm. Immature capsids get stuck in the basket. Capsids encapsulate the pre-genomic RNA and the P protein. Pre-genomic RNA is reverse-transcribed into DNA while the capsid is still in the cytoplasm. The capsid can then either be directed to the nucleus, providing more genomes for transcription, or bud through the endoplasmic reticulum to provide new virions. The chain is Capsid protein from Urocitellus parryii kennicottii (ASHV).